Consider the following 311-residue polypeptide: Tyrosine recombinase XerC (311 aa).

Positions 14–100 (ESLNETAKKF…SLRTFYKVLL (87 aa)) constitute a Core-binding (CB) domain. The 183-residue stretch at 121-303 (EVPKNFRINE…SKEKIKEVYR (183 aa)) folds into the Tyr recombinase domain. Residues Arg-163, Lys-187, His-255, Arg-258, and His-281 contribute to the active site. The active-site O-(3'-phospho-DNA)-tyrosine intermediate is the Tyr-290.

Belongs to the 'phage' integrase family. XerC subfamily. As to quaternary structure, forms a cyclic heterotetrameric complex composed of two molecules of XerC and two molecules of XerD.

The protein localises to the cytoplasm. Functionally, site-specific tyrosine recombinase, which acts by catalyzing the cutting and rejoining of the recombining DNA molecules. The XerC-XerD complex is essential to convert dimers of the bacterial chromosome into monomers to permit their segregation at cell division. It also contributes to the segregational stability of plasmids. The polypeptide is Tyrosine recombinase XerC (Leptospira interrogans serogroup Icterohaemorrhagiae serovar copenhageni (strain Fiocruz L1-130)).